A 546-amino-acid chain; its full sequence is Probable protein kinase UbiB (546 aa).

The 379-residue stretch at 124–502 folds into the Protein kinase domain; that stretch reads DFEIKPLASA…HVRQGQSRYF (379 aa). Residues 130 to 138 and K153 contribute to the ATP site; that span reads LASASIAQV. The Proton acceptor role is filled by D288. The next 2 membrane-spanning stretches (helical) occupy residues 501–521 and 522–542; these read YFLG…VSRP and EWGL…FVGW.

The protein belongs to the ABC1 family. UbiB subfamily.

It is found in the cell inner membrane. It functions in the pathway cofactor biosynthesis; ubiquinone biosynthesis [regulation]. In terms of biological role, is probably a protein kinase regulator of UbiI activity which is involved in aerobic coenzyme Q (ubiquinone) biosynthesis. The sequence is that of Probable protein kinase UbiB from Escherichia coli (strain SMS-3-5 / SECEC).